Here is a 410-residue protein sequence, read N- to C-terminus: MAVPFYLPEGGADDVASSSSGASGNSSPHNHPLPSSASSSVSSSGVSSASASSASSSSSASSDGASSAASQSPNTTTSSATQTPMQSPLPTDQVLYALYEWVRMYQSQQSAPQIFQYPPPSPSCNFTGGDVFFPHGHPNPNSNPHPRTPRTSVSFSSGEEYNFFRQQQPQPHPSYPAPSTPQPMPPQSAPPMHCSHSYPQQSAHMMPHHSAPFGMGGTYYAGYTPPPTPNTASAGTSSSSAAFGWHGHPHSPFTSTSTPLSAPVAPKMRLQRSQSDAARRKRLTSTGEDEREYQSDHEATWDEFGDRYDNFTAGRERLQEFNGRIPPRKKKSSNSHSSSSNNPVCHTDSQPGGTSQAESGAIHGHISQQRQVERERQKAKAEKKKPQSFTWPTVVTVFVLAMGCGFFAAR.

4 disordered regions span residues 1-88 (MAVP…MQSP), 126-207 (FTGG…HMMP), 230-301 (NTAS…EATW), and 319-386 (QEFN…KKKP). 2 stretches are compositionally biased toward low complexity: residues 13–27 (DDVASSSSGASGNSS) and 35–70 (SSASSSVSSSGVSSASASSASSSSSASSDGASSAAS). Positions 71–88 (QSPNTTTSSATQTPMQSP) are enriched in polar residues. The segment covering 134–145 (PHGHPNPNSNPH) has biased composition (low complexity). Polar residues predominate over residues 149–159 (PRTSVSFSSGE). The segment covering 170 to 189 (QPHPSYPAPSTPQPMPPQSA) has biased composition (pro residues). Residues 230–242 (NTASAGTSSSSAA) show a composition bias toward low complexity. Positions 292-301 (EYQSDHEATW) are enriched in basic and acidic residues. Ser-295 is subject to Phosphoserine. Over residues 343 to 358 (PVCHTDSQPGGTSQAE) the composition is skewed to polar residues. A compositionally biased stretch (basic and acidic residues) spans 371-380 (QVERERQKAK).

The protein to D.melanogaster grim and rpr. Interacts with Diap2 (via BIR2 and BIR3 domains).

Its function is as follows. Activator of apoptosis, with grim and rpr, that acts on the effector Dredd. Seems to act genetically upstream of baculoviral anti-apoptotic p35. Blocks Diap2 from binding and inactivating the effector caspase Drice. Might regulate apoptosis downstream of Clbn/NEMF. This is Cell death protein hid (hid) from Drosophila melanogaster (Fruit fly).